Consider the following 230-residue polypeptide: Orotidine 5'-phosphate decarboxylase (230 aa).

Residues Asp10, Lys32, Asp59–Thr68, Thr119, Arg180, Gln189, Gly209, and Arg210 each bind substrate. Catalysis depends on Lys61, which acts as the Proton donor.

Belongs to the OMP decarboxylase family. Type 1 subfamily. Homodimer.

It carries out the reaction orotidine 5'-phosphate + H(+) = UMP + CO2. Its pathway is pyrimidine metabolism; UMP biosynthesis via de novo pathway; UMP from orotate: step 2/2. Its function is as follows. Catalyzes the decarboxylation of orotidine 5'-monophosphate (OMP) to uridine 5'-monophosphate (UMP). This Haemophilus influenzae (strain ATCC 51907 / DSM 11121 / KW20 / Rd) protein is Orotidine 5'-phosphate decarboxylase.